Reading from the N-terminus, the 206-residue chain is uncharacterized protein (206 aa).

In terms of domain architecture, Nudix hydrolase spans 29–169; the sequence is YWHSTFHCWV…DGVFAEGFIV (141 aa). Positions 69-90 match the Nudix box motif; that stretch reads AGHIKSGESIEDGVRELKEELG. Residues E84 and E88 each contribute to the Mg(2+) site.

Belongs to the Nudix hydrolase family. It depends on Mg(2+) as a cofactor.

This is an uncharacterized protein from Clostridium acetobutylicum (strain ATCC 824 / DSM 792 / JCM 1419 / IAM 19013 / LMG 5710 / NBRC 13948 / NRRL B-527 / VKM B-1787 / 2291 / W).